The chain runs to 108 residues: uncharacterized protein (108 aa).

This is an uncharacterized protein from Methanocaldococcus jannaschii (strain ATCC 43067 / DSM 2661 / JAL-1 / JCM 10045 / NBRC 100440) (Methanococcus jannaschii).